Consider the following 258-residue polypeptide: Ribonuclease PH (258 aa).

Phosphate is bound by residues Arg-86 and 124–126 (GTR).

Belongs to the RNase PH family. Homohexameric ring arranged as a trimer of dimers.

It catalyses the reaction tRNA(n+1) + phosphate = tRNA(n) + a ribonucleoside 5'-diphosphate. Phosphorolytic 3'-5' exoribonuclease that plays an important role in tRNA 3'-end maturation. Removes nucleotide residues following the 3'-CCA terminus of tRNAs; can also add nucleotides to the ends of RNA molecules by using nucleoside diphosphates as substrates, but this may not be physiologically important. Probably plays a role in initiation of 16S rRNA degradation (leading to ribosome degradation) during starvation. This Caldicellulosiruptor saccharolyticus (strain ATCC 43494 / DSM 8903 / Tp8T 6331) protein is Ribonuclease PH.